Reading from the N-terminus, the 139-residue chain is FAD synthase (139 aa).

Residues 8-9 (VF), 13-16 (HPGH), D92, and Y119 contribute to the ATP site.

It belongs to the archaeal FAD synthase family. In terms of assembly, homodimer. Requires a divalent metal cation as cofactor.

It catalyses the reaction FMN + ATP + H(+) = FAD + diphosphate. Its pathway is cofactor biosynthesis; FAD biosynthesis; FAD from FMN: step 1/1. Functionally, catalyzes the transfer of the AMP portion of ATP to flavin mononucleotide (FMN) to produce flavin adenine dinucleotide (FAD) coenzyme. This chain is FAD synthase, found in Picrophilus torridus (strain ATCC 700027 / DSM 9790 / JCM 10055 / NBRC 100828 / KAW 2/3).